Consider the following 58-residue polypeptide: Large ribosomal subunit protein bL32 (58 aa).

This sequence belongs to the bacterial ribosomal protein bL32 family.

The sequence is that of Large ribosomal subunit protein bL32 from Ligilactobacillus salivarius (strain UCC118) (Lactobacillus salivarius).